Consider the following 278-residue polypeptide: MAVAYADKPNHFINFPLTQFEGFVLNYKGLQFQLLDEGVDCKIQTAPHISLAMLDIQPEDYRSVDVAIQEVIDDMHWGEGFQIKFDNPLILGRCIVLDVKGVEELHDDLVNYIRDKGCVADQSRKWIGHCTIAQLTDAALSIKENVDFINSMQFNYKITINPSSPARLEIVKLGAEKKDGFYETIVSHWMGIRFEYNPPTDKLAMIMGYCCLEVVRKELEEGDLPENDDDAWFKLSYHYENNSWFFRHVYRKSSYFRKSCQNLDCNCLGFYESPVEED.

This sequence belongs to the coronaviruses ns2a protein family.

The chain is Non-structural protein 2a from Bovine coronavirus (strain Mebus) (BCoV).